A 327-amino-acid chain; its full sequence is DNA repair protein XRCC4 (327 aa).

Residues 1-211 (MERKVSRISL…QLEKNLKPER (211 aa)) are interaction with IFFO1. Ser53 is subject to Phosphoserine. 2 coiled-coil regions span residues 133–153 (IAEK…LLRD) and 183–213 (LNEK…ERET). Interaction with LIG4 stretches follow at residues 179-210 (FILV…LKPE) and 179-211 (FILV…KPER). A Phosphoserine modification is found at Ser192. Residue Lys208 forms a Glycyl lysine isopeptide (Lys-Gly) (interchain with G-Cter in SUMO) linkage. Tyr226 is modified (phosphotyrosine). Ser229 bears the Phosphoserine mark. Thr230 is modified (phosphothreonine). 2 positions are modified to phosphoserine: Ser249 and Ser253. Positions 255–327 (DVTDIAPSRK…RNSSPEDIFD (73 aa)) are disordered. The Nuclear localization signal motif lies at 263-268 (RKRRHH). Residue Lys289 forms a Glycyl lysine isopeptide (Lys-Gly) (interchain with G-Cter in ubiquitin) linkage. A phosphoserine mark is found at Ser294, Ser295, Ser308, and Ser313. The segment covering 308–327 (SAGNMSLETLRNSSPEDIFD) has biased composition (polar residues). A Phosphothreonine modification is found at Thr316. 2 positions are modified to phosphoserine: Ser320 and Ser321.

It belongs to the XRCC4-XLF family. XRCC4 subfamily. In terms of assembly, homodimer and homotetramer in solution. Interacts with NHEJ1/XLF; the interaction is direct and is mediated via a head-to-head interaction between N-terminal head regions. Interacts with LIG4; the LIG4-XRCC4 subcomplex has a 1:2 stoichiometry and XRCC4 is required for LIG4 stability. Component of the core long-range non-homologous end joining (NHEJ) complex (also named DNA-PK complex) composed of PRKDC, LIG4, XRCC4, XRCC6/Ku70, XRCC5/Ku86 and NHEJ1/XLF. Additional component of the NHEJ complex includes PAXX. Following autophosphorylation, PRKDC dissociates from DNA, leading to formation of the short-range NHEJ complex, composed of LIG4, XRCC4, XRCC6/Ku70, XRCC5/Ku86 and NHEJ1/XLF. Interacts with PRKDC; the interaction is direct. Interacts with XRCC6/Ku70; the interaction is direct. Interacts with APTX and APLF. Forms a heterotetramer with IFFO1; the interaction involves LIG4-free XRCC4 and leads to the relocalization of IFFO1 to the sites of DNA damage. Interacts with PNKP; mainly interacts with PNKP when phosphorylated at Thr-230, but is also able to interact at much lower level with PNKP when not unphosphorylated. Interacts with POLL (DNA polymerase lambda). Interacts with XKR4; interacts with the processed form of XKR4, which is cleaved by caspase. Phosphorylated by PRKDC at the C-terminus in response to DNA damage; Ser-253 constitutes the main phosphorylation sites. Phosphorylations by PRKDC at the C-terminus of XRCC4 and NHEJ1/XLF are highly redundant and regulate ability of the XRCC4-NHEJ1/XLF subcomplex to bridge DNA. Phosphorylation by PRKDC does not prevent interaction with NHEJ1/XLF but disrupts ability to bridge DNA and promotes detachment from DNA. Phosphorylation at Ser-320 and Ser-321 by PRKDC promotes recognition by the SCF(FBXW7) complex and subsequent ubiquitination via 'Lys-63'-linked ubiquitin. Phosphorylation at Thr-230 by CK2 promotes interaction with PNKP; regulating PNKP activity and localization to DNA damage sites. Phosphorylation by CK2 promotes interaction with APTX. Post-translationally, ubiquitinated at Lys-289 by the SCF(FBXW7) complex via 'Lys-63'-linked ubiquitination, thereby promoting double-strand break repair: the SCF(FBXW7) complex specifically recognizes XRCC4 when phosphorylated at Ser-320 and Ser-321 by PRKDC, and 'Lys-63'-linked ubiquitination facilitates DNA non-homologous end joining (NHEJ) by enhancing association with XRCC5/Ku80 and XRCC6/Ku70. Monoubiquitinated. In terms of processing, undergoes proteolytic processing by caspase-3 (CASP3). This generates the protein XRCC4, C-terminus (XRCC4/C), which translocates to the cytoplasm and activates phospholipid scramblase activity of XKR4, thereby promoting phosphatidylserine exposure on apoptotic cell surface.

It is found in the nucleus. It localises to the chromosome. The protein localises to the cytoplasm. DNA non-homologous end joining (NHEJ) core factor, required for double-strand break repair and V(D)J recombination. Acts as a scaffold protein that regulates recruitment of other proteins to DNA double-strand breaks (DSBs). Associates with NHEJ1/XLF to form alternating helical filaments that bridge DNA and act like a bandage, holding together the broken DNA until it is repaired. The XRCC4-NHEJ1/XLF subcomplex binds to the DNA fragments of a DSB in a highly diffusive manner and robustly bridges two independent DNA molecules, holding the broken DNA fragments in close proximity to one other. The mobility of the bridges ensures that the ends remain accessible for further processing by other repair factors. Plays a key role in the NHEJ ligation step of the broken DNA during DSB repair via direct interaction with DNA ligase IV (LIG4): the LIG4-XRCC4 subcomplex reseals the DNA breaks after the gap filling is completed. XRCC4 stabilizes LIG4, regulates its subcellular localization and enhances LIG4's joining activity. Binding of the LIG4-XRCC4 subcomplex to DNA ends is dependent on the assembly of the DNA-dependent protein kinase complex DNA-PK to these DNA ends. Promotes displacement of PNKP from processed strand break termini. Its function is as follows. Acts as an activator of the phospholipid scramblase activity of XKR4. This form, which is generated upon caspase-3 (CASP3) cleavage, translocates into the cytoplasm and interacts with XKR4, thereby promoting phosphatidylserine scramblase activity of XKR4 and leading to phosphatidylserine exposure on apoptotic cell surface. This Cricetulus griseus (Chinese hamster) protein is DNA repair protein XRCC4.